A 640-amino-acid polypeptide reads, in one-letter code: Probable potassium transport system protein Kup (640 aa).

12 consecutive transmembrane segments (helical) span residues 26-46, 69-89, 117-137, 155-175, 186-206, 224-244, 265-285, 297-317, 355-375, 384-404, 415-435, and 437-457; these read IAGL…TSPL, ILSL…VLFI, AWVL…DGMI, PAFR…LFVI, IFGP…IAGI, FFAD…LAIT, WFLV…ALIL, LLVP…ATII, IYVP…VVGF, AYGI…FVVV, AGLF…ATTV, and ILAG…LLTT.

Belongs to the HAK/KUP transporter (TC 2.A.72) family.

The protein localises to the cell inner membrane. The enzyme catalyses K(+)(in) + H(+)(in) = K(+)(out) + H(+)(out). In terms of biological role, transport of potassium into the cell. Likely operates as a K(+):H(+) symporter. In Aromatoleum aromaticum (strain DSM 19018 / LMG 30748 / EbN1) (Azoarcus sp. (strain EbN1)), this protein is Probable potassium transport system protein Kup.